Reading from the N-terminus, the 336-residue chain is Lipoyl synthase (336 aa).

C81, C86, C92, C107, C111, C114, and S323 together coordinate [4Fe-4S] cluster. Residues 93 to 312 form the Radical SAM core domain; it reads FGHGTATFMI…EDYGYELGFS (220 aa).

This sequence belongs to the radical SAM superfamily. Lipoyl synthase family. It depends on [4Fe-4S] cluster as a cofactor.

The protein resides in the cytoplasm. The catalysed reaction is [[Fe-S] cluster scaffold protein carrying a second [4Fe-4S](2+) cluster] + N(6)-octanoyl-L-lysyl-[protein] + 2 oxidized [2Fe-2S]-[ferredoxin] + 2 S-adenosyl-L-methionine + 4 H(+) = [[Fe-S] cluster scaffold protein] + N(6)-[(R)-dihydrolipoyl]-L-lysyl-[protein] + 4 Fe(3+) + 2 hydrogen sulfide + 2 5'-deoxyadenosine + 2 L-methionine + 2 reduced [2Fe-2S]-[ferredoxin]. It functions in the pathway protein modification; protein lipoylation via endogenous pathway; protein N(6)-(lipoyl)lysine from octanoyl-[acyl-carrier-protein]: step 2/2. Catalyzes the radical-mediated insertion of two sulfur atoms into the C-6 and C-8 positions of the octanoyl moiety bound to the lipoyl domains of lipoate-dependent enzymes, thereby converting the octanoylated domains into lipoylated derivatives. This chain is Lipoyl synthase, found in Stenotrophomonas maltophilia (strain R551-3).